A 406-amino-acid polypeptide reads, in one-letter code: MAAKIIGGCCSWRRFYRKRTSSRFLIFSVRASSSMDDMDTVYKQLGLFSLKKKIKDVVLKAEMFAPDALELEEEQWIKQEETMRYFDLWDDPAKSDEILLKLADRAKAVDSLKDLKYKAEEAKLIIQLGEMDAIDYSLFEQAYDSSLDVSRSLHHYEMSKLLRDQYDAEGACMIIKSGSPGAKSQIWTEQVVSMYIKWAERLGQNARVAEKCSLLSNKSGVSSATIEFEFEFAYGYLLGERGVHRLIISSTSNEECSATVDIIPLFLRASPDFEVKEGDLIVSYPAKEDHKIAENMVCIHHIPSGVTLQSSGERNRFANRIKALNRLKAKLLVIAKEQKVSDVNKIDSKNILEPREETRSYVSKGHKMVVDRKTGLEILDLKSVLDGNIGPLLGAHISMRRSIDAI.

This sequence belongs to the prokaryotic/mitochondrial release factor family. In terms of assembly, interacts with PDE338.

The protein resides in the plastid. The protein localises to the chloroplast stroma. It is found in the chloroplast. In terms of biological role, involved in the light- and stress-dependent regulation of stability of 3' processed petB transcripts, thus regulating cytochrome b6 accumulation, a rate-limiting step in photosynthetic electron transport. May be recruited to specifically protect petB transcripts against 3'-5' exonucleolytic attack by masking the 3' ends. Does not function as release factor. The protein is Peptide chain release factor PrfB3, chloroplastic of Arabidopsis thaliana (Mouse-ear cress).